A 144-amino-acid polypeptide reads, in one-letter code: Glycine-rich protein HC1 (144 aa).

Residues isoleucine 5 to alanine 25 traverse the membrane as a helical segment. A run of 11 repeats spans residues glycine 37–glycine 42, glycine 43–glycine 48, glycine 50–glycine 55, glycine 56–glycine 61, glycine 63–glycine 68, glycine 69–glycine 74, glycine 76–glycine 81, glycine 82–glycine 87, glycine 89–glycine 94, glycine 102–glycine 107, and glycine 108–glycine 113. The segment at glycine 37 to glycine 113 is 11 X 6 AA tandem repeats of G-Y-[NH]-N-G -G.

It belongs to the GRP family.

It is found in the membrane. This is Glycine-rich protein HC1 from Oxybasis rubra (Red goosefoot).